The sequence spans 500 residues: NAD(P)H-quinone oxidoreductase chain 4, chloroplastic (500 aa).

Transmembrane regions (helical) follow at residues 4 to 24 (FPWL…MLFL), 35 to 55 (YTIC…CYNF), 87 to 107 (IGTI…AFPV), 113 to 130 (LFHF…GSFS), 134 to 154 (LLLF…LLSM), 167 to 187 (FILY…GISL), 211 to 231 (ILFY…IPLH), 242 to 262 (HYST…YGLV), 272 to 292 (AHSM…IYAA), 305 to 325 (IAYS…SITD), 330 to 350 (GAIL…FLAG), 386 to 406 (LALP…GIIT), 416 to 436 (ILII…LLSM), and 462 to 482 (LFLS…PDFV).

It belongs to the complex I subunit 4 family.

It localises to the plastid. The protein localises to the chloroplast thylakoid membrane. The catalysed reaction is a plastoquinone + NADH + (n+1) H(+)(in) = a plastoquinol + NAD(+) + n H(+)(out). It catalyses the reaction a plastoquinone + NADPH + (n+1) H(+)(in) = a plastoquinol + NADP(+) + n H(+)(out). The chain is NAD(P)H-quinone oxidoreductase chain 4, chloroplastic from Olimarabidopsis pumila (Dwarf rocket).